Here is a 348-residue protein sequence, read N- to C-terminus: Autophagy-related protein 27 (348 aa).

Residues 1–20 (MYRPDLLAFLLPLLAAPVFS) form the signal peptide. Residues 21–274 (AETLDCGKIR…DDGGDNSSSH (254 aa)) are Lumenal-facing. The region spanning 24–255 (LDCGKIRADG…TWHTKYACEK (232 aa)) is the MRH domain. Cystine bridges form between C26–C69, C82–C89, and C175–C253. N-linked (GlcNAc...) asparagine glycosylation is found at N61 and N84. Residues 180-208 (EGTEGEWVSEEKYEKRADEKKDDDKKEDG) show a composition bias toward basic and acidic residues. The segment at 180–219 (EGTEGEWVSEEKYEKRADEKKDDDKKEDGGDKDEGESTLE) is disordered. N-linked (GlcNAc...) asparagine glycosylation is found at N226 and N270. A helical membrane pass occupies residues 275-295 (WGFFTWFVLIAFLLIAGYLIF). The Cytoplasmic segment spans residues 296 to 348 (SSWINFTRYGARGWDLLPHSDTIRDIPYLLKDFIRRILNTVQGTGSRGGYSAV).

Belongs to the ATG27 family. Forms a complex with ATG9 and ATG23.

The protein localises to the cytoplasmic vesicle membrane. It localises to the golgi apparatus membrane. It is found in the mitochondrion membrane. Its subcellular location is the preautophagosomal structure membrane. Its function is as follows. Effector of VPS34 phosphatidylinositol 3-phosphate kinase signaling. Regulates the cytoplasm to vacuole transport (Cvt) vesicle formation. Plays a role in ATG protein retrieval from the pre-autophagosomal structure (PAS) and is especially required for autophagy-dependent cycling of ATG9. Autophagy is required for proper vegetative growth, asexual/sexual reproduction, and full virulence. Autophagy is particularly involved in the biosynthesis of deoxynivalenol (DON), an important virulence determinant. The polypeptide is Autophagy-related protein 27 (Gibberella zeae (strain ATCC MYA-4620 / CBS 123657 / FGSC 9075 / NRRL 31084 / PH-1) (Wheat head blight fungus)).